The chain runs to 142 residues: ATP synthase epsilon chain (142 aa).

This sequence belongs to the ATPase epsilon chain family. F-type ATPases have 2 components, CF(1) - the catalytic core - and CF(0) - the membrane proton channel. CF(1) has five subunits: alpha(3), beta(3), gamma(1), delta(1), epsilon(1). CF(0) has three main subunits: a, b and c.

The protein resides in the cell inner membrane. Functionally, produces ATP from ADP in the presence of a proton gradient across the membrane. The polypeptide is ATP synthase epsilon chain (Shewanella sediminis (strain HAW-EB3)).